The sequence spans 432 residues: Enolase (432 aa).

Gln167 contacts (2R)-2-phosphoglycerate. Glu209 functions as the Proton donor in the catalytic mechanism. Asp246, Glu291, and Asp318 together coordinate Mg(2+). The (2R)-2-phosphoglycerate site is built by Lys343, Arg372, Ser373, and Lys394. Lys343 (proton acceptor) is an active-site residue.

This sequence belongs to the enolase family. As to quaternary structure, component of the RNA degradosome, a multiprotein complex involved in RNA processing and mRNA degradation. The cofactor is Mg(2+).

The protein localises to the cytoplasm. Its subcellular location is the secreted. It is found in the cell surface. It catalyses the reaction (2R)-2-phosphoglycerate = phosphoenolpyruvate + H2O. The protein operates within carbohydrate degradation; glycolysis; pyruvate from D-glyceraldehyde 3-phosphate: step 4/5. Its function is as follows. Catalyzes the reversible conversion of 2-phosphoglycerate (2-PG) into phosphoenolpyruvate (PEP). It is essential for the degradation of carbohydrates via glycolysis. This is Enolase from Aliivibrio fischeri (strain MJ11) (Vibrio fischeri).